Reading from the N-terminus, the 461-residue chain is Probable tubulin polyglutamylase TTLL9 (461 aa).

Polar residues predominate over residues 1–10 (MSRQKSQTSK). Positions 1–20 (MSRQKSQTSKGHGASKGKER) are disordered. Residues 22–402 (QRTLIRFKTT…EARLTGKEKR (381 aa)) enclose the TTL domain. ATP contacts are provided by residues Lys-149 and 155–156 (QG). Gln-155 provides a ligand contact to a protein. Over residues 186–197 (QATRANVNPSGS) the composition is skewed to polar residues. The tract at residues 186–208 (QATRANVNPSGSHDTRSSDDQKD) is disordered. Positions 198–208 (HDTRSSDDQKD) are enriched in basic and acidic residues. ATP is bound by residues 218–221 (QRYV) and 231–233 (KFD). Residue Arg-257 coordinates L-glutamate. Residue 276–277 (TN) participates in ATP binding. Lys-294 provides a ligand contact to L-glutamate. Mg(2+) contacts are provided by Asp-348, Glu-361, and Asn-363. Residue Lys-379 coordinates L-glutamate.

The protein belongs to the tubulin--tyrosine ligase family. Mg(2+) is required as a cofactor.

It is found in the cytoplasm. It localises to the cytoskeleton. Its subcellular location is the cilium basal body. The protein resides in the flagellum axoneme. It carries out the reaction (L-glutamyl)(n)-gamma-L-glutamyl-L-glutamyl-[protein] + L-glutamate + ATP = (L-glutamyl)(n+1)-gamma-L-glutamyl-L-glutamyl-[protein] + ADP + phosphate + H(+). Probable tubulin polyglutamylase that generates side chains of glutamate on the gamma-carboxyl group of specific glutamate residues within the C-terminal tail of target proteins. Similar to TTLL1, may acquire enzymatic activity only in complex with other proteins as it is most likely lacking domains important for autonomous activity. Mediates tubulin polyglutamylation which induces establishment of microtubule heterogeneity in sperm flagella, thereby playing a role in normal motile flagella axoneme structure and sperm flagella beating pattern. The sequence is that of Probable tubulin polyglutamylase TTLL9 (Ttll9) from Rattus norvegicus (Rat).